We begin with the raw amino-acid sequence, 208 residues long: Thymidylate kinase (208 aa).

An ATP-binding site is contributed by 11–18; sequence GTEGVGKT.

This sequence belongs to the thymidylate kinase family.

The catalysed reaction is dTMP + ATP = dTDP + ADP. Phosphorylation of dTMP to form dTDP in both de novo and salvage pathways of dTTP synthesis. This is Thymidylate kinase from Psychrobacter sp. (strain PRwf-1).